A 177-amino-acid chain; its full sequence is Inorganic pyrophosphatase (177 aa).

Substrate contacts are provided by K30, R44, and Y56. Mg(2+)-binding residues include D66, D71, and D103. Position 142 (Y142) interacts with substrate.

Belongs to the PPase family. As to quaternary structure, homohexamer. Mg(2+) is required as a cofactor.

It is found in the cytoplasm. The enzyme catalyses diphosphate + H2O = 2 phosphate + H(+). Functionally, catalyzes the hydrolysis of inorganic pyrophosphate (PPi) forming two phosphate ions. This is Inorganic pyrophosphatase from Mesorhizobium japonicum (strain LMG 29417 / CECT 9101 / MAFF 303099) (Mesorhizobium loti (strain MAFF 303099)).